Reading from the N-terminus, the 631-residue chain is 1-deoxy-D-xylulose-5-phosphate synthase (631 aa).

Thiamine diphosphate contacts are provided by residues H73 and 114–116 (GHS). D145 contributes to the Mg(2+) binding site. Thiamine diphosphate contacts are provided by residues 146–147 (GA), N174, Y285, and E366. N174 lines the Mg(2+) pocket.

Belongs to the transketolase family. DXPS subfamily. In terms of assembly, homodimer. Mg(2+) serves as cofactor. The cofactor is thiamine diphosphate.

The enzyme catalyses D-glyceraldehyde 3-phosphate + pyruvate + H(+) = 1-deoxy-D-xylulose 5-phosphate + CO2. It functions in the pathway metabolic intermediate biosynthesis; 1-deoxy-D-xylulose 5-phosphate biosynthesis; 1-deoxy-D-xylulose 5-phosphate from D-glyceraldehyde 3-phosphate and pyruvate: step 1/1. In terms of biological role, catalyzes the acyloin condensation reaction between C atoms 2 and 3 of pyruvate and glyceraldehyde 3-phosphate to yield 1-deoxy-D-xylulose-5-phosphate (DXP). This is 1-deoxy-D-xylulose-5-phosphate synthase from Desulfitobacterium hafniense (strain DSM 10664 / DCB-2).